The following is a 489-amino-acid chain: Cytochrome P450 71A26 (489 aa).

Residues 1–21 traverse the membrane as a helical segment; the sequence is MMIMFFLLCSIIFVVTIIIFR. Heme is bound at residue C431.

The protein belongs to the cytochrome P450 family. Heme serves as cofactor.

It is found in the membrane. The chain is Cytochrome P450 71A26 (CYP71A26) from Arabidopsis thaliana (Mouse-ear cress).